The chain runs to 215 residues: ATP phosphoribosyltransferase (215 aa).

It belongs to the ATP phosphoribosyltransferase family. Short subfamily. In terms of assembly, heteromultimer composed of HisG and HisZ subunits.

Its subcellular location is the cytoplasm. It catalyses the reaction 1-(5-phospho-beta-D-ribosyl)-ATP + diphosphate = 5-phospho-alpha-D-ribose 1-diphosphate + ATP. It participates in amino-acid biosynthesis; L-histidine biosynthesis; L-histidine from 5-phospho-alpha-D-ribose 1-diphosphate: step 1/9. Functionally, catalyzes the condensation of ATP and 5-phosphoribose 1-diphosphate to form N'-(5'-phosphoribosyl)-ATP (PR-ATP). Has a crucial role in the pathway because the rate of histidine biosynthesis seems to be controlled primarily by regulation of HisG enzymatic activity. This Prochlorococcus marinus subsp. pastoris (strain CCMP1986 / NIES-2087 / MED4) protein is ATP phosphoribosyltransferase.